Consider the following 138-residue polypeptide: Peptide methionine sulfoxide reductase MsrB (138 aa).

Residues 15 to 137 (EAEWRAQLDP…NSASLGFEPR (123 aa)) form the MsrB domain. The Zn(2+) site is built by cysteine 54, cysteine 57, cysteine 103, and cysteine 106. Cysteine 126 functions as the Nucleophile in the catalytic mechanism.

This sequence belongs to the MsrB Met sulfoxide reductase family. Requires Zn(2+) as cofactor.

It catalyses the reaction L-methionyl-[protein] + [thioredoxin]-disulfide + H2O = L-methionyl-(R)-S-oxide-[protein] + [thioredoxin]-dithiol. The sequence is that of Peptide methionine sulfoxide reductase MsrB from Methylibium petroleiphilum (strain ATCC BAA-1232 / LMG 22953 / PM1).